The following is a 424-amino-acid chain: Enolase (424 aa).

Gln162 serves as a coordination point for (2R)-2-phosphoglycerate. Glu204 acts as the Proton donor in catalysis. Asp241, Glu284, and Asp311 together coordinate Mg(2+). 4 residues coordinate (2R)-2-phosphoglycerate: Lys336, Arg365, Ser366, and Lys387. The active-site Proton acceptor is the Lys336.

This sequence belongs to the enolase family. Requires Mg(2+) as cofactor.

It localises to the cytoplasm. It is found in the secreted. The protein resides in the cell surface. It carries out the reaction (2R)-2-phosphoglycerate = phosphoenolpyruvate + H2O. It participates in carbohydrate degradation; glycolysis; pyruvate from D-glyceraldehyde 3-phosphate: step 4/5. Its function is as follows. Catalyzes the reversible conversion of 2-phosphoglycerate (2-PG) into phosphoenolpyruvate (PEP). It is essential for the degradation of carbohydrates via glycolysis. The polypeptide is Enolase (Mesorhizobium japonicum (strain LMG 29417 / CECT 9101 / MAFF 303099) (Mesorhizobium loti (strain MAFF 303099))).